Here is an 822-residue protein sequence, read N- to C-terminus: ATP-dependent zinc metalloprotease FTSH 8, mitochondrial (822 aa).

Positions 1-25 (MSLASLARALSRRSAPSSSRARQGF) are enriched in low complexity. Disordered stretches follow at residues 1–50 (MSLA…LHGG), 103–131 (NYYP…STDD), and 202–221 (SSPQ…TTND). The transit peptide at 1–93 (MSLASLARAL…LANPQFRRLF (93 aa)) directs the protein to the mitochondrion. The span at 108–127 (GKKEAPKGDGSNKSDSKQDS) shows a compositional bias: basic and acidic residues. Residue 375-382 (GPPGTGKT) coordinates ATP. Histidine 600 contributes to the Zn(2+) binding site. Glutamate 601 is a catalytic residue. Zn(2+) contacts are provided by histidine 604 and aspartate 676. Residues 781 to 822 (PTNYDLFKQGFQDEEDSKNQEAAKTPQPDDDGTPSLGEVVPT) form a disordered region.

The protein in the N-terminal section; belongs to the AAA ATPase family. This sequence in the C-terminal section; belongs to the peptidase M41 family. Zn(2+) serves as cofactor.

The protein localises to the mitochondrion. Its function is as follows. Probable ATP-dependent zinc metallopeptidase. The sequence is that of ATP-dependent zinc metalloprotease FTSH 8, mitochondrial (FTSH8) from Oryza sativa subsp. japonica (Rice).